The chain runs to 106 residues: NADH-quinone oxidoreductase subunit K (106 aa).

The next 3 membrane-spanning stretches (helical) occupy residues 10 to 30 (VTYILGLAGILFSIGVLGVLI), 34 to 54 (IVIIFMSVELILNSVNLVFVT), and 67 to 87 (IVFFVMAIAAAEAAVGLALVI).

Belongs to the complex I subunit 4L family. NDH-1 is composed of 14 different subunits. Subunits NuoA, H, J, K, L, M, N constitute the membrane sector of the complex.

The protein localises to the cell inner membrane. The enzyme catalyses a quinone + NADH + 5 H(+)(in) = a quinol + NAD(+) + 4 H(+)(out). In terms of biological role, NDH-1 shuttles electrons from NADH, via FMN and iron-sulfur (Fe-S) centers, to quinones in the respiratory chain. The immediate electron acceptor for the enzyme in this species is believed to be ubiquinone. Couples the redox reaction to proton translocation (for every two electrons transferred, four hydrogen ions are translocated across the cytoplasmic membrane), and thus conserves the redox energy in a proton gradient. The protein is NADH-quinone oxidoreductase subunit K of Leptospira biflexa serovar Patoc (strain Patoc 1 / Ames).